The chain runs to 257 residues: Imidazole glycerol phosphate synthase subunit HisF (257 aa).

Residues D12 and D131 contribute to the active site.

It belongs to the HisA/HisF family. As to quaternary structure, heterodimer of HisH and HisF.

It localises to the cytoplasm. The catalysed reaction is 5-[(5-phospho-1-deoxy-D-ribulos-1-ylimino)methylamino]-1-(5-phospho-beta-D-ribosyl)imidazole-4-carboxamide + L-glutamine = D-erythro-1-(imidazol-4-yl)glycerol 3-phosphate + 5-amino-1-(5-phospho-beta-D-ribosyl)imidazole-4-carboxamide + L-glutamate + H(+). Its pathway is amino-acid biosynthesis; L-histidine biosynthesis; L-histidine from 5-phospho-alpha-D-ribose 1-diphosphate: step 5/9. IGPS catalyzes the conversion of PRFAR and glutamine to IGP, AICAR and glutamate. The HisF subunit catalyzes the cyclization activity that produces IGP and AICAR from PRFAR using the ammonia provided by the HisH subunit. This is Imidazole glycerol phosphate synthase subunit HisF from Burkholderia orbicola (strain MC0-3).